We begin with the raw amino-acid sequence, 64 residues long: U6-theraphotoxin-Cg1a (64 aa).

A signal peptide spans 1 to 20 (MTRKILAVLLVFTLVACNNA). Residues 21 to 38 (EKYSETDVEDSPMIQERR) constitute a propeptide that is removed on maturation. Cystine bridges form between Cys-39/Cys-55, Cys-46/Cys-58, and Cys-54/Cys-63.

This sequence belongs to the neurotoxin 36 family. 02 subfamily. Expressed by the venom gland.

It is found in the secreted. In terms of biological role, probable ion channel inhibitor. In Chilobrachys guangxiensis (Chinese earth tiger tarantula), this protein is U6-theraphotoxin-Cg1a.